A 162-amino-acid polypeptide reads, in one-letter code: Transcription elongation factor GreA (162 aa).

A coiled-coil region spans residues 45–75; it reads ENAEYEAAREKQAFIEGRIKELEDMAARAEI.

The protein belongs to the GreA/GreB family.

Functionally, necessary for efficient RNA polymerase transcription elongation past template-encoded arresting sites. The arresting sites in DNA have the property of trapping a certain fraction of elongating RNA polymerases that pass through, resulting in locked ternary complexes. Cleavage of the nascent transcript by cleavage factors such as GreA or GreB allows the resumption of elongation from the new 3'terminus. GreA releases sequences of 2 to 3 nucleotides. The polypeptide is Transcription elongation factor GreA (Rickettsia canadensis (strain McKiel)).